The sequence spans 125 residues: Sulfiredoxin, chloroplastic/mitochondrial (125 aa).

A chloroplast and mitochondrion-targeting transit peptide spans 1–22 (MANLMMRLPISLRSFSVSASSS).

The protein belongs to the sulfiredoxin family. Low expression in photosynthetic tissues such as leaves and sepals.

The protein resides in the plastid. It localises to the chloroplast. Its subcellular location is the mitochondrion. The catalysed reaction is S-hydroxy-S-oxy-L-cysteinyl-[peroxiredoxin] + [protein]-dithiol + ATP = S-hydroxy-L-cysteinyl-[peroxiredoxin] + [protein]-disulfide + ADP + phosphate. In terms of biological role, contributes to oxidative stress resistance by reducing cysteine-sulfinic acid formed under exposure to oxidants in a peroxiredoxin. May catalyze the reduction in a multi-step process by acting both as a specific phosphotransferase and a thioltransferase. Required to switch on the antioxidant pathway to regenerate the oxidative damage. In mitochondrion, catalyzes the retroreduction of the inactive sulfinic form of atypical Prx IIF using thioredoxin as reducing agent. The sequence is that of Sulfiredoxin, chloroplastic/mitochondrial (SRX) from Arabidopsis thaliana (Mouse-ear cress).